Consider the following 323-residue polypeptide: Methionyl-tRNA formyltransferase (323 aa).

A (6S)-5,6,7,8-tetrahydrofolate-binding site is contributed by 115–118; sequence SLLP.

The protein belongs to the Fmt family.

It catalyses the reaction L-methionyl-tRNA(fMet) + (6R)-10-formyltetrahydrofolate = N-formyl-L-methionyl-tRNA(fMet) + (6S)-5,6,7,8-tetrahydrofolate + H(+). Attaches a formyl group to the free amino group of methionyl-tRNA(fMet). The formyl group appears to play a dual role in the initiator identity of N-formylmethionyl-tRNA by promoting its recognition by IF2 and preventing the misappropriation of this tRNA by the elongation apparatus. The sequence is that of Methionyl-tRNA formyltransferase from Blochmanniella floridana.